The primary structure comprises 362 residues: sn-glycerol-3-phosphate import ATP-binding protein UgpC (362 aa).

Residues 4-235 (LKLQAVTKSY…PATLFVASFI (232 aa)) enclose the ABC transporter domain. 37-44 (GPSGCGKS) is a binding site for ATP.

It belongs to the ABC transporter superfamily. sn-glycerol-3-phosphate importer (TC 3.A.1.1.3) family. The complex is composed of two ATP-binding proteins (UgpC), two transmembrane proteins (UgpA and UgpE) and a solute-binding protein (UgpB).

Its subcellular location is the cell inner membrane. It catalyses the reaction sn-glycerol 3-phosphate(out) + ATP + H2O = sn-glycerol 3-phosphate(in) + ADP + phosphate + H(+). In terms of biological role, part of the ABC transporter complex UgpBAEC involved in sn-glycerol-3-phosphate (G3P) import. Responsible for energy coupling to the transport system. The polypeptide is sn-glycerol-3-phosphate import ATP-binding protein UgpC (Yersinia enterocolitica serotype O:8 / biotype 1B (strain NCTC 13174 / 8081)).